A 280-amino-acid polypeptide reads, in one-letter code: Urease accessory protein UreD 1 (280 aa).

It belongs to the UreD family. As to quaternary structure, ureD, UreF and UreG form a complex that acts as a GTP-hydrolysis-dependent molecular chaperone, activating the urease apoprotein by helping to assemble the nickel containing metallocenter of UreC. The UreE protein probably delivers the nickel.

The protein localises to the cytoplasm. Functionally, required for maturation of urease via the functional incorporation of the urease nickel metallocenter. This is Urease accessory protein UreD 1 from Bradyrhizobium sp. (strain BTAi1 / ATCC BAA-1182).